Consider the following 197-residue polypeptide: Small ribosomal subunit protein uS4c (197 aa).

Positions 82 to 143 constitute an S4 RNA-binding domain; sequence MRLDNILFRL…KQRSKALIQN (62 aa).

The protein belongs to the universal ribosomal protein uS4 family. As to quaternary structure, part of the 30S ribosomal subunit. Contacts protein S5. The interaction surface between S4 and S5 is involved in control of translational fidelity.

The protein resides in the plastid. The protein localises to the chloroplast. In terms of biological role, one of the primary rRNA binding proteins, it binds directly to 16S rRNA where it nucleates assembly of the body of the 30S subunit. Functionally, with S5 and S12 plays an important role in translational accuracy. The protein is Small ribosomal subunit protein uS4c (rps4) of Gladiolus papilio (Goldblotch gladiolus).